The following is a 1183-amino-acid chain: MAGQVVQYGRHRKRRNYARISEVLELPNLIEIQTKSYDWFLKEGLLEMFRDISPIEDFTGNLSLEFVDYRLGEPKYDLEESKNRDATYAAPLRVKVRLIIKETGEVKEQEVFMGDFPLMTDTGTFVINGAERVIVSQLVRSPSVYFNEKIDKNGRENYDATIIPNRGAWLEYETDAKDVVYVRIDRTRKLPLTVLLRALGFSNDQEIIDLLGDSEYLRNTLEKDGTENTEQALLEIYERLRPGEPPTVENAKSLLYSRFFDPKRYDLASVGRYKANKKLHLKHRLFNQRLAEPIVNSETGEIVAEEGTVLDRRKLDEIMEVLETNANSEVFELEGTVIDEPVEIQSIKVYVPNDEEGRTTTVIGNALPDSEVKCITPADIIASMSYFFNLLNGIGYTDDIDHLGNRRLRSVGELLQNQFRIGLSRMERVVRERMSIQDTDSITPQQLINIRPVIASIKEFFGSSQLSQFMDQANPLAELTHKRRLSALGPGGLTRERAQMEVRDVHYSHYGRMCPIETPEGPNIGLINSLSSYARVNEFGFIETPYRKVDLDTNSITDQIDYLTADEEDSYVVAQANSRLDENGRFLDDEVVCRFRGNNTVMAKEKMDYMDVSPKQVVSAATACIPFLENDDSNRALMGANMQRQAVPLMNTEAPFVGTGMEHVAARDSGAAITAKYRGRVEHVESKEILVRRLVEENGTEHEGELDRYPLAKFKRSNTGTCYNQRPIVSVGDVVEYNEILADGPSMELGEMALGRNVVVGFMTWDGYNYEDAVIMSERLVKDDVYTSIHIEEYESEARDTKLGPEEITRDIPNVSENALKNLDDRGIVYVGAEVKDGDILVGKVTPKGVTELTAEERLLHAIFGEKAREVRDTSLRVPHGAGGIVLDVKVFNREEGDDTLSPGVNQLVRVYIVQKRKIHVGDKMCGRHGNKGVISKIVPEEDMPYLPDGRPIDIMLNPLGVPSRMNIGQVLELHLGMAAKNLGIHVASPVFDGANDDDVWSTIEEAGMARDGKTVLYDGRTGEPFDNRISVGVMYMLKLAHMVDDKLHARSTGPYSLVTQQPLGGKAQFGGQRFGEMEVWALEAYGAAYTLQEILTYKSDDTVGRVKTYEAIVKGENISRPSVPESFRVLMKELQSLGLDVKVMDEQDNEIEMADVDDEDATERKVDLQQKDVPETQKETTD.

A compositionally biased stretch (acidic residues) spans 1149-1162 (DNEIEMADVDDEDA). A disordered region spans residues 1149–1183 (DNEIEMADVDDEDATERKVDLQQKDVPETQKETTD). Positions 1163–1183 (TERKVDLQQKDVPETQKETTD) are enriched in basic and acidic residues.

This sequence belongs to the RNA polymerase beta chain family. As to quaternary structure, the RNAP catalytic core consists of 2 alpha, 1 beta, 1 beta' and 1 omega subunit. When a sigma factor is associated with the core the holoenzyme is formed, which can initiate transcription.

The enzyme catalyses RNA(n) + a ribonucleoside 5'-triphosphate = RNA(n+1) + diphosphate. Its function is as follows. DNA-dependent RNA polymerase catalyzes the transcription of DNA into RNA using the four ribonucleoside triphosphates as substrates. The polypeptide is DNA-directed RNA polymerase subunit beta (Staphylococcus haemolyticus (strain JCSC1435)).